The following is a 2582-amino-acid chain: Chromodomain-helicase-DNA-binding protein 8 (2582 aa).

Disordered stretches follow at residues 22 to 111 (DDSF…PVLQ), 136 to 155 (MGVS…PSQS), 253 to 283 (VKGS…TQGE), and 349 to 377 (QKIQ…PLTL). 3 stretches are compositionally biased toward polar residues: residues 42 to 51 (SLDSLDQMNQ), 94 to 111 (DYTT…PVLQ), and 141 to 155 (TGVS…PSQS). A compositionally biased stretch (low complexity) spans 255–267 (GSAPAGNPGAAGP). Residues 355–372 (PQPPSSQPQPQPQPPPSA) are compositionally biased toward pro residues. Residue Ser434 is modified to Phosphoserine. Disordered regions lie at residues 475-585 (RARG…VKRK) and 598-617 (DEEE…PILP). Over residues 495-518 (RPEEEGEKKRRKKSSGERLKEEKP) the composition is skewed to basic and acidic residues. Residues Ser555 and Ser564 each carry the phosphoserine modification. Basic residues predominate over residues 574–585 (QKRRSNRQVKRK). A Glycyl lysine isopeptide (Lys-Gly) (interchain with G-Cter in SUMO) cross-link involves residue Lys611. Chromo domains follow at residues 644–711 (AIVD…AQMR) and 726–792 (VEVD…RVNR). A Helicase ATP-binding domain is found at 825 to 999 (LFNWYNRQNC…FSLLHFLEPS (175 aa)). ATP is bound at residue 838-845 (DEMGLGKT). The DEAH box motif lies at 950–953 (DEAH). In terms of domain architecture, Helicase C-terminal spans 1139–1290 (LIDKLLPKLK…KAVLQSMSGR (152 aa)). A phosphoserine mark is found at Ser1422 and Ser1426. Positions 1694 to 1715 (EDPEYKPLQGPPKDPDDEGDPL) are disordered. Residues 1791 to 2304 (IARREKQQRW…LVELEVECME (514 aa)) are interaction with FAM124B. Residues Ser1978 and Ser1980 each carry the phosphoserine modification. The disordered stretch occupies residues 1990 to 2019 (QCTSRTASPSPLRPDAPVEKSPEESTVQVP). Thr1995 is modified (phosphothreonine). Phosphoserine is present on residues Ser1997, Ser1999, and Ser2010. A Glycyl lysine isopeptide (Lys-Gly) (interchain with G-Cter in SUMO2) cross-link involves residue Lys2027. 3 positions are modified to phosphoserine: Ser2040, Ser2070, and Ser2072. The tract at residues 2045-2120 (VRVGSSDTAP…RSRPKLYDEE (76 aa)) is disordered. Residues 2065 to 2074 (EDEDDSDSEL) are compositionally biased toward acidic residues. Low complexity predominate over residues 2077–2096 (SKLSPSSSSSSSSSSSSSST). Basic and acidic residues predominate over residues 2104–2118 (EEKLTADRSRPKLYD). Phosphoserine occurs at positions 2184, 2202, and 2204. Residues 2187 to 2233 (VTAGGILGPGNHLLDSPSLTPGEDGDSPVPTPRSGSAASMAEEEASA) are disordered. Thr2206 is modified (phosphothreonine). Ser2213 carries the phosphoserine modification. Thr2217 bears the Phosphothreonine mark. Residues 2222 to 2233 (SAASMAEEEASA) show a composition bias toward low complexity. Position 2225 is a phosphoserine (Ser2225). Lys2258 is covalently cross-linked (Glycyl lysine isopeptide (Lys-Gly) (interchain with G-Cter in SUMO2)). The tract at residues 2486 to 2582 (HVDSSTMLHH…NSDSSEDADD (97 aa)) is disordered. The segment covering 2493-2511 (LHHHHHHPHPHHHHHHHPG) has biased composition (basic residues). Over residues 2514–2529 (TTGYPSSPATTTSGTA) the composition is skewed to low complexity. Ser2520 carries the post-translational modification Phosphoserine. The segment covering 2537–2551 (PEDDDEEEDEEDDDL) has biased composition (acidic residues).

It belongs to the SNF2/RAD54 helicase family. CHD8 subfamily. Interacts with CTNNB1 and PIAS3. Component of some MLL1/MLL complex, at least composed of the core components KMT2A/MLL1, ASH2L, HCFC1/HCF1, WDR5 and RBBP5, as well as the facultative components BACC1, CHD8, E2F6, HSP70, INO80C, KANSL1, LAS1L, MAX, MCRS1, MGA, KAT8/MOF, PELP1, PHF20, PRP31, RING2, RUVB1/TIP49A, RUVB2/TIP49B, SENP3, TAF1, TAF4, TAF6, TAF7, TAF9 and TEX10. Interacts with CHD7. Interacts with FAM124B. Interacts with p53/TP53 and histone H1. Interacts with CTCF. Interacts with TLK2. Interacts with HNRNPL in an RNA-dependent manner. Post-translationally, sumoylated.

The protein resides in the nucleus. It carries out the reaction ATP + H2O = ADP + phosphate + H(+). Functionally, ATP-dependent chromatin-remodeling factor, it slides nucleosomes along DNA; nucleosome sliding requires ATP. Acts as a transcription repressor by remodeling chromatin structure and recruiting histone H1 to target genes. Suppresses p53/TP53-mediated apoptosis by recruiting histone H1 and preventing p53/TP53 transactivation activity. Acts as a negative regulator of Wnt signaling pathway by regulating beta-catenin (CTNNB1) activity. Negatively regulates CTNNB1-targeted gene expression by being recruited specifically to the promoter regions of several CTNNB1 responsive genes. Involved in both enhancer blocking and epigenetic remodeling at chromatin boundary via its interaction with CTCF. Acts as a suppressor of STAT3 activity by suppressing the LIF-induced STAT3 transcriptional activity. Also acts as a transcription activator via its interaction with ZNF143 by participating in efficient U6 RNA polymerase III transcription. Regulates alternative splicing of a core group of genes involved in neuronal differentiation, cell cycle and DNA repair. Enables H3K36me3-coupled transcription elongation and co-transcriptional RNA processing likely via interaction with HNRNPL. The chain is Chromodomain-helicase-DNA-binding protein 8 from Mus musculus (Mouse).